The sequence spans 101 residues: Large ribosomal subunit protein eL30 (101 aa).

The protein belongs to the eukaryotic ribosomal protein eL30 family.

In Thermococcus celer, this protein is Large ribosomal subunit protein eL30 (rpl30e).